Here is a 202-residue protein sequence, read N- to C-terminus: MEVEASYSYGFLPSGRHQPYAPPPPHPAEEGELWEYFPCPFCYIEVEVPFICNHLQEEHCFDTRNAVCPLCADNIGRDMGAHFRVQHSHLLKRRKPSRPSSSWPTPSNNSDPYFEGPPQYMMNNRTYQDPAPDPLLSQFICSMAQTDTNSDNTNTEIAVSAVSHDQRLSQRVTLTDDASKLELKERLQRIEFVKEIIMSTIL.

Basic residues predominate over residues 88–97 (SHLLKRRKPS). The segment at 88 to 120 (SHLLKRRKPSRPSSSWPTPSNNSDPYFEGPPQY) is disordered. Residues 98–112 (RPSSSWPTPSNNSDP) show a composition bias toward low complexity.

This sequence belongs to the Di19 family.

This Oryza sativa subsp. japonica (Rice) protein is Protein DEHYDRATION-INDUCED 19 homolog 5 (DI19-5).